The primary structure comprises 116 residues: T-cell leukemia/lymphoma protein 1A (116 aa).

The protein belongs to the TCL1 family. Homodimer. Interacts with AKT1, AKT2 and AKT3 (via PH domain). Interacts with PNPT1; the interaction has no effect on PNPT1 exonuclease activity.

Its subcellular location is the cytoplasm. It is found in the nucleus. The protein resides in the microsome. The protein localises to the endoplasmic reticulum. Functionally, enhances the phosphorylation and activation of AKT1 and AKT2. Enhances cell proliferation, stabilizes mitochondrial membrane potential and promotes cell survival. The polypeptide is T-cell leukemia/lymphoma protein 1A (Tcl1a) (Mus musculus (Mouse)).